Here is a 251-residue protein sequence, read N- to C-terminus: MQNNQFPHFSDEVGDRNMHNPYASGSSYDALFPPCAKLPYHGVELQPSAVCPKNFVIFDQTYDRSQVMYHPELTHKLMNTPSLNNLASTFQNEYVGGSYGNYGNYEQEVSSSYQEDPNEIDALLSADEDYEENDDNEGEEDGGDSEEVSTARTSSRDYGNTTAESCCSSYGYNNNNNNNSRKQSLSGSASSSNNDGKGRKKMKKMMGVLRRIVPGGEQMNTACVLDEAVQYLKSLKIEAQKLGVGHFSNQS.

3 disordered regions span residues 1-20, 130-161, and 173-202; these read MQNNQFPHFSDEVGDRNMHN, YEENDDNEGEEDGGDSEEVSTARTSSRDYGNT, and NNNNNNNSRKQSLSGSASSSNNDGKGRKKM. The span at 9–18 shows a compositional bias: basic and acidic residues; that stretch reads FSDEVGDRNM. Residues 130 to 147 are compositionally biased toward acidic residues; the sequence is YEENDDNEGEEDGGDSEE. Residues 148–161 show a composition bias toward polar residues; sequence VSTARTSSRDYGNT. The segment covering 173 to 192 has biased composition (low complexity); the sequence is NNNNNNNSRKQSLSGSASSS. Residues 186 to 235 form the bHLH domain; the sequence is SGSASSSNNDGKGRKKMKKMMGVLRRIVPGGEQMNTACVLDEAVQYLKSL.

In terms of assembly, homodimer. Interacts with LHW.

The protein resides in the nucleus. The sequence is that of Transcription factor bHLH144 (BHLH144) from Arabidopsis thaliana (Mouse-ear cress).